Consider the following 374-residue polypeptide: Cell division protein DivIB (374 aa).

The interval 1–90 is disordered; that stretch reads MWKISNENDI…EEEHFADRLP (90 aa). At 1–103 the chain is on the cytoplasmic side; it reads MWKISNENDI…KTRNKRLYRR (103 aa). A compositionally biased stretch (basic and acidic residues) spans 39 to 53; that stretch reads YLKKQAEEAASKGEN. Polar residues predominate over residues 56–75; it reads AEVTITLQEQSQEEPQQHLP. Residues 104-124 traverse the membrane as a helical segment; the sequence is LAFILTCLGTAILVALYFVSP. The Extracellular segment spans residues 125–374; that stretch reads LSRLSEVTVS…GENQEVQQAE (250 aa). A POTRA domain is found at 126 to 197; that stretch reads SRLSEVTVSG…NSFKIDIQEY (72 aa). Residues 325-374 are disordered; that stretch reads KESEETGSEVSEDSAVENQEVVDPNAGVATDEANNGTPTNGENQEVQQAE. A compositionally biased stretch (acidic residues) spans 326 to 339; that stretch reads ESEETGSEVSEDSA. The segment covering 356–374 has biased composition (polar residues); that stretch reads EANNGTPTNGENQEVQQAE.

Belongs to the FtsQ/DivIB family. DivIB subfamily.

Its subcellular location is the cell membrane. In terms of biological role, cell division protein that may be involved in stabilizing or promoting the assembly of the division complex. The protein is Cell division protein DivIB of Enterococcus faecalis (strain ATCC 700802 / V583).